The sequence spans 199 residues: Probable nicotinate-nucleotide adenylyltransferase (199 aa).

This sequence belongs to the NadD family.

The enzyme catalyses nicotinate beta-D-ribonucleotide + ATP + H(+) = deamido-NAD(+) + diphosphate. Its pathway is cofactor biosynthesis; NAD(+) biosynthesis; deamido-NAD(+) from nicotinate D-ribonucleotide: step 1/1. Functionally, catalyzes the reversible adenylation of nicotinate mononucleotide (NaMN) to nicotinic acid adenine dinucleotide (NaAD). This is Probable nicotinate-nucleotide adenylyltransferase from Corynebacterium jeikeium (strain K411).